The sequence spans 115 residues: NADH-ubiquinone oxidoreductase chain 3 (115 aa).

A run of 3 helical transmembrane segments spans residues 3–23, 55–75, and 84–104; these read LFVA…VAFW, FFLV…LLPL, and LSAM…GLIY.

It belongs to the complex I subunit 3 family. Core subunit of respiratory chain NADH dehydrogenase (Complex I) which is composed of 45 different subunits. Interacts with TMEM186. Interacts with TMEM242.

It localises to the mitochondrion inner membrane. The catalysed reaction is a ubiquinone + NADH + 5 H(+)(in) = a ubiquinol + NAD(+) + 4 H(+)(out). Functionally, core subunit of the mitochondrial membrane respiratory chain NADH dehydrogenase (Complex I) which catalyzes electron transfer from NADH through the respiratory chain, using ubiquinone as an electron acceptor. Essential for the catalytic activity of complex I. In Sigmodon hispidus (Hispid cotton rat), this protein is NADH-ubiquinone oxidoreductase chain 3.